A 189-amino-acid polypeptide reads, in one-letter code: Chitin synthase 1 (189 aa).

The protein belongs to the chitin synthase family. Class I subfamily.

It is found in the cell membrane. The enzyme catalyses [(1-&gt;4)-N-acetyl-beta-D-glucosaminyl](n) + UDP-N-acetyl-alpha-D-glucosamine = [(1-&gt;4)-N-acetyl-beta-D-glucosaminyl](n+1) + UDP + H(+). In terms of biological role, polymerizes chitin, a structural polymer of the cell wall and septum, by transferring the sugar moiety of UDP-GlcNAc to the non-reducing end of the growing chitin polymer. The chain is Chitin synthase 1 (CHS1) from Exophiala jeanselmei (Dematiaceous fungus).